The following is a 108-amino-acid chain: Peptidyl-prolyl cis-trans isomerase FKBP1A (108 aa).

S10 carries the post-translational modification Phosphoserine. One can recognise a PPIase FKBP-type domain in the interval 20–108; that stretch reads GQTCVVHYTG…VFDVELLKLE (89 aa). N6-acetyllysine; alternate is present on K53. N6-succinyllysine; alternate is present on K53.

Belongs to the FKBP-type PPIase family. FKBP1 subfamily. As to quaternary structure, interacts with TGFBR1; prevents TGFBR1 phosphorylation by TGFBR2 and stabilizes it in the inactive conformation. Interacts with ACVR1B and SMAD7. Identified in a complex composed of RYR1, PDE4D, PKA, FKBP1A and protein phosphatase 1 (PP1). Interacts directly with RYR2. Interacts directly with RYR3. Interacts directly with RYR1. Interacts with GLMN; rapamycin and FK506 abolish the interaction with GLMN in a dose dependent manner. As to expression, ubiquitous.

The protein localises to the cytoplasm. It localises to the cytosol. The protein resides in the sarcoplasmic reticulum membrane. The catalysed reaction is [protein]-peptidylproline (omega=180) = [protein]-peptidylproline (omega=0). Its activity is regulated as follows. Inhibited by both FK506 and rapamycin. Functionally, keeps in an inactive conformation TGFBR1, the TGF-beta type I serine/threonine kinase receptor, preventing TGF-beta receptor activation in absence of ligand. Recruits SMAD7 to ACVR1B which prevents the association of SMAD2 and SMAD3 with the activin receptor complex, thereby blocking the activin signal. May modulate the RYR1 calcium channel activity. PPIases accelerate the folding of proteins. It catalyzes the cis-trans isomerization of proline imidic peptide bonds in oligopeptides. In Rattus norvegicus (Rat), this protein is Peptidyl-prolyl cis-trans isomerase FKBP1A (Fkbp1a).